The chain runs to 189 residues: Translation initiation factor IF-3 (189 aa).

This sequence belongs to the IF-3 family. In terms of assembly, monomer.

The protein localises to the cytoplasm. IF-3 binds to the 30S ribosomal subunit and shifts the equilibrium between 70S ribosomes and their 50S and 30S subunits in favor of the free subunits, thus enhancing the availability of 30S subunits on which protein synthesis initiation begins. In Corynebacterium glutamicum (strain ATCC 13032 / DSM 20300 / JCM 1318 / BCRC 11384 / CCUG 27702 / LMG 3730 / NBRC 12168 / NCIMB 10025 / NRRL B-2784 / 534), this protein is Translation initiation factor IF-3.